Here is a 273-residue protein sequence, read N- to C-terminus: Translation initiation factor 2 subunit alpha (273 aa).

Positions 12 to 83 (GEFVVATVKN…EKGHIDLSLK (72 aa)) constitute an S1 motif domain.

The protein belongs to the eIF-2-alpha family. As to quaternary structure, heterotrimer composed of an alpha, a beta and a gamma chain.

Functionally, eIF-2 functions in the early steps of protein synthesis by forming a ternary complex with GTP and initiator tRNA. The protein is Translation initiation factor 2 subunit alpha of Thermococcus gammatolerans (strain DSM 15229 / JCM 11827 / EJ3).